The sequence spans 396 residues: S-adenosylmethionine synthase 3 (396 aa).

Glutamate 12 provides a ligand contact to Mg(2+). Histidine 18 lines the ATP pocket. K(+) is bound at residue glutamate 46. L-methionine contacts are provided by glutamate 59 and glutamine 102. ATP contacts are provided by residues 170-172 (DGK), 238-241 (SGRF), aspartate 249, 255-256 (RK), alanine 272, lysine 276, and lysine 280. Aspartate 249 contributes to the L-methionine binding site. Residue lysine 280 participates in L-methionine binding.

It belongs to the AdoMet synthase family. Homotetramer. It depends on Mn(2+) as a cofactor. Mg(2+) is required as a cofactor. The cofactor is Co(2+). Requires K(+) as cofactor.

The protein resides in the cytoplasm. It catalyses the reaction L-methionine + ATP + H2O = S-adenosyl-L-methionine + phosphate + diphosphate. Its pathway is amino-acid biosynthesis; S-adenosyl-L-methionine biosynthesis; S-adenosyl-L-methionine from L-methionine: step 1/1. Functionally, catalyzes the formation of S-adenosylmethionine from methionine and ATP. The reaction comprises two steps that are both catalyzed by the same enzyme: formation of S-adenosylmethionine (AdoMet) and triphosphate, and subsequent hydrolysis of the triphosphate. The sequence is that of S-adenosylmethionine synthase 3 (METK3) from Oryza sativa subsp. japonica (Rice).